The following is an 873-amino-acid chain: Probable beta-glucosidase A (873 aa).

The first 19 residues, 1–19 (MRFGWLEVAALTAASVANA), serve as a signal peptide directing secretion. Asn71, Asn222, and Asn263 each carry an N-linked (GlcNAc...) asparagine glycan. Residue Asp291 is part of the active site. Residues Asn326, Asn333, Asn365, Asn453, Asn534, Asn553, Asn575, Asn679, and Asn725 are each glycosylated (N-linked (GlcNAc...) asparagine). Residues 731 to 764 (DSSDDPNYGWEDSEYIPEGARDGSPQPLLKAGGA) form a disordered region.

The protein belongs to the glycosyl hydrolase 3 family.

It localises to the secreted. The catalysed reaction is Hydrolysis of terminal, non-reducing beta-D-glucosyl residues with release of beta-D-glucose.. It functions in the pathway glycan metabolism; cellulose degradation. Functionally, beta-glucosidases are one of a number of cellulolytic enzymes involved in the degradation of cellulosic biomass. Catalyzes the last step releasing glucose from the inhibitory cellobiose. This Aspergillus fumigatus (strain CBS 144.89 / FGSC A1163 / CEA10) (Neosartorya fumigata) protein is Probable beta-glucosidase A (bglA).